Reading from the N-terminus, the 244-residue chain is Ribosomal RNA small subunit methyltransferase G (244 aa).

Residues Gly-79, Phe-84, 102 to 104 (DST), 130 to 131 (AE), and Arg-149 contribute to the S-adenosyl-L-methionine site. The tract at residues 225–244 (DRYPRREGVPNQQPLFWSAK) is disordered. The span at 234–244 (PNQQPLFWSAK) shows a compositional bias: polar residues.

Belongs to the methyltransferase superfamily. RNA methyltransferase RsmG family.

It localises to the cytoplasm. Its function is as follows. Specifically methylates the N7 position of a guanine in 16S rRNA. The polypeptide is Ribosomal RNA small subunit methyltransferase G (Deinococcus deserti (strain DSM 17065 / CIP 109153 / LMG 22923 / VCD115)).